The sequence spans 425 residues: Septin-11 (425 aa).

Residue A2 is modified to N-acetylalanine. Residue S9 is modified to Phosphoserine. In terms of domain architecture, Septin-type G spans 38–304 (QGFCFNILCV…ELYRRCKLEE (267 aa)). The tract at residues 48–55 (GETGIGKS) is G1 motif. Residues 48 to 55 (GETGIGKS), G103, 184 to 192 (KADTIAKNE), G238, and R253 each bind GTP. Positions 100 to 103 (DTVG) are G3 motif. The tract at residues 183-186 (AKAD) is G4 motif. A coiled-coil region spans residues 320–410 (QETYEAKRNE…AAQLLQSQAQ (91 aa)). The interval 399–425 (KAAAQLLQSQAQQSGAQQTKKDKDKKN) is disordered. The segment covering 401–416 (AAQLLQSQAQQSGAQQ) has biased composition (low complexity).

This sequence belongs to the TRAFAC class TrmE-Era-EngA-EngB-Septin-like GTPase superfamily. Septin GTPase family. Septins polymerize into heterooligomeric protein complexes that form filaments, and can associate with cellular membranes, actin filaments and microtubules. Forms homooligomers. GTPase activity is required for filament formation. Interacts with SEPTIN7, SEPTIN9 and SEPTIN12.

Its subcellular location is the cytoplasm. The protein resides in the cytoskeleton. The protein localises to the synapse. It is found in the cell projection. It localises to the dendritic spine. Its subcellular location is the axon. In terms of biological role, filament-forming cytoskeletal GTPase. May play a role in cytokinesis (Potential). May play a role in the cytoarchitecture of neurons, including dendritic arborization and dendritic spines, and in GABAergic synaptic connectivity. In Bos taurus (Bovine), this protein is Septin-11.